The sequence spans 346 residues: Glycosyltransferase 1 domain-containing protein 1 (346 aa).

The N-terminal stretch at 1-16 (MRLLFLAVLRPHTGNA) is a signal peptide.

It belongs to the glycosyltransferase group 1 family. Glycosyltransferase 4 subfamily.

Its subcellular location is the secreted. The polypeptide is Glycosyltransferase 1 domain-containing protein 1 (GLT1D1) (Pongo abelii (Sumatran orangutan)).